The sequence spans 188 residues: Ribosome-recycling factor (188 aa).

It belongs to the RRF family.

The protein resides in the cytoplasm. Its function is as follows. Responsible for the release of ribosomes from messenger RNA at the termination of protein biosynthesis. May increase the efficiency of translation by recycling ribosomes from one round of translation to another. This Blochmanniella pennsylvanica (strain BPEN) protein is Ribosome-recycling factor.